Consider the following 174-residue polypeptide: Ribosome maturation factor RimP (174 aa).

It belongs to the RimP family.

The protein resides in the cytoplasm. Functionally, required for maturation of 30S ribosomal subunits. This is Ribosome maturation factor RimP from Acinetobacter baumannii (strain AB307-0294).